An 85-amino-acid polypeptide reads, in one-letter code: Alpha-toxin Ac2 (85 aa).

A signal peptide spans 1–19 (MNYLVMISLALLFMTGVES). The region spanning 21–83 (KDGYIVDDRN…VRTKGPGRCK (63 aa)) is the LCN-type CS-alpha/beta domain. 4 disulfide bridges follow: C31–C82, C35–C55, C41–C65, and C45–C67. K83 carries the post-translational modification Lysine amide.

Belongs to the long (4 C-C) scorpion toxin superfamily. Sodium channel inhibitor family. Alpha subfamily. As to expression, expressed by the venom gland.

It localises to the secreted. Alpha toxins bind voltage-independently at site-3 of sodium channels (Nav) and inhibit the inactivation of the activated channels, thereby blocking neuronal transmission. The polypeptide is Alpha-toxin Ac2 (Androctonus crassicauda (Arabian fat-tailed scorpion)).